Reading from the N-terminus, the 259-residue chain is 7-cyano-7-deazaguanine synthase (259 aa).

Leu32 to Leu42 provides a ligand contact to ATP. Residues Cys223, Cys233, Cys236, and Cys239 each contribute to the Zn(2+) site.

This sequence belongs to the QueC family. Zn(2+) is required as a cofactor.

The enzyme catalyses 7-carboxy-7-deazaguanine + NH4(+) + ATP = 7-cyano-7-deazaguanine + ADP + phosphate + H2O + H(+). The protein operates within purine metabolism; 7-cyano-7-deazaguanine biosynthesis. In terms of biological role, catalyzes the ATP-dependent conversion of 7-carboxy-7-deazaguanine (CDG) to 7-cyano-7-deazaguanine (preQ(0)). In Psychrobacter arcticus (strain DSM 17307 / VKM B-2377 / 273-4), this protein is 7-cyano-7-deazaguanine synthase.